Here is a 481-residue protein sequence, read N- to C-terminus: Methylenetetrahydrofolate--tRNA-(uracil-5-)-methyltransferase TrmFO (481 aa).

13 to 18 serves as a coordination point for FAD; that stretch reads GGGLAG.

Belongs to the MnmG family. TrmFO subfamily. FAD is required as a cofactor.

The protein resides in the cytoplasm. It carries out the reaction uridine(54) in tRNA + (6R)-5,10-methylene-5,6,7,8-tetrahydrofolate + NADH + H(+) = 5-methyluridine(54) in tRNA + (6S)-5,6,7,8-tetrahydrofolate + NAD(+). It catalyses the reaction uridine(54) in tRNA + (6R)-5,10-methylene-5,6,7,8-tetrahydrofolate + NADPH + H(+) = 5-methyluridine(54) in tRNA + (6S)-5,6,7,8-tetrahydrofolate + NADP(+). Catalyzes the folate-dependent formation of 5-methyl-uridine at position 54 (M-5-U54) in all tRNAs. This Agrobacterium fabrum (strain C58 / ATCC 33970) (Agrobacterium tumefaciens (strain C58)) protein is Methylenetetrahydrofolate--tRNA-(uracil-5-)-methyltransferase TrmFO.